The following is a 248-amino-acid chain: UPF0736 protein BcerKBAB4_1085 (248 aa).

It belongs to the UPF0736 family.

In Bacillus mycoides (strain KBAB4) (Bacillus weihenstephanensis), this protein is UPF0736 protein BcerKBAB4_1085.